A 392-amino-acid chain; its full sequence is Putative purine permease 19 (392 aa).

Residues 1–16 (MGFHTKSPDRVTHEEE) are compositionally biased toward basic and acidic residues. The tract at residues 1–29 (MGFHTKSPDRVTHEEEANIGVDNQPRETT) is disordered. Ser30 is subject to Phosphoserine. The next 10 helical transmembrane spans lie at 46–66 (ICIF…TLLL), 88–108 (WLQS…LLLW), 128–148 (LFLL…LYAI), 154–174 (VFFL…TTII), 182–202 (WIIL…TSSG), 220–240 (WCAF…QLGF), 254–274 (VILM…VGLF), 300–320 (LIGL…LVCL), 325–345 (FSNV…VLAF), and 354–374 (FFKE…VYSL).

The protein belongs to the purine permeases (TC 2.A.7.14) family.

Its subcellular location is the membrane. This Arabidopsis thaliana (Mouse-ear cress) protein is Putative purine permease 19 (PUP19).